The following is a 218-amino-acid chain: Glutathione S-transferase class-mu 26 kDa isozyme 7 (218 aa).

Positions 2–83 (PAKLGYWKIR…YIADKHGMLG (82 aa)) constitute a GST N-terminal domain. Residues 7 to 8 (YW), 41 to 45 (WLGDK), 54 to 55 (NL), and 67 to 68 (QS) contribute to the glutathione site. The 119-residue stretch at 85–203 (TPEERARISM…KSERFIKWPL (119 aa)) folds into the GST C-terminal domain. A substrate-binding site is contributed by tyrosine 111.

This sequence belongs to the GST superfamily. Mu family. In terms of assembly, homodimer.

It catalyses the reaction RX + glutathione = an S-substituted glutathione + a halide anion + H(+). In terms of biological role, conjugation of reduced glutathione to a wide number of exogenous and endogenous hydrophobic electrophiles. Functionally, GST isoenzymes appear to play a central role in the parasite detoxification system. Other functions are also suspected including a role in increasing the solubility of haematin in the parasite gut. This is Glutathione S-transferase class-mu 26 kDa isozyme 7 from Fasciola hepatica (Liver fluke).